The following is a 244-amino-acid chain: DNA repair protein RecO (244 aa).

It belongs to the RecO family.

In terms of biological role, involved in DNA repair and RecF pathway recombination. The sequence is that of DNA repair protein RecO from Polynucleobacter asymbioticus (strain DSM 18221 / CIP 109841 / QLW-P1DMWA-1) (Polynucleobacter necessarius subsp. asymbioticus).